A 158-amino-acid polypeptide reads, in one-letter code: Small ribosomal subunit protein uS7 (158 aa).

The protein belongs to the universal ribosomal protein uS7 family. As to quaternary structure, part of the 30S ribosomal subunit. Contacts proteins S9 and S11.

One of the primary rRNA binding proteins, it binds directly to 16S rRNA where it nucleates assembly of the head domain of the 30S subunit. Is located at the subunit interface close to the decoding center, probably blocks exit of the E-site tRNA. The polypeptide is Small ribosomal subunit protein uS7 (Parabacteroides distasonis (strain ATCC 8503 / DSM 20701 / CIP 104284 / JCM 5825 / NCTC 11152)).